Reading from the N-terminus, the 27-residue chain is Cupiennin-3a (27 aa).

Glu27 bears the Glutamic acid 1-amide mark.

In terms of tissue distribution, expressed by the venom gland.

It localises to the secreted. The polypeptide is Cupiennin-3a (Cupiennius salei (American wandering spider)).